The chain runs to 423 residues: Serine--tRNA ligase 1 (423 aa).

Position 231 to 233 (231 to 233 (TAE)) interacts with L-serine. 262 to 264 (RSE) lines the ATP pocket. Glu-285 lines the L-serine pocket. Position 349 to 352 (349 to 352 (EISS)) interacts with ATP. Residue Ser-384 participates in L-serine binding.

Belongs to the class-II aminoacyl-tRNA synthetase family. Type-1 seryl-tRNA synthetase subfamily. As to quaternary structure, homodimer. The tRNA molecule binds across the dimer.

It localises to the cytoplasm. It catalyses the reaction tRNA(Ser) + L-serine + ATP = L-seryl-tRNA(Ser) + AMP + diphosphate + H(+). The enzyme catalyses tRNA(Sec) + L-serine + ATP = L-seryl-tRNA(Sec) + AMP + diphosphate + H(+). It participates in aminoacyl-tRNA biosynthesis; selenocysteinyl-tRNA(Sec) biosynthesis; L-seryl-tRNA(Sec) from L-serine and tRNA(Sec): step 1/1. Catalyzes the attachment of serine to tRNA(Ser). Is also able to aminoacylate tRNA(Sec) with serine, to form the misacylated tRNA L-seryl-tRNA(Sec), which will be further converted into selenocysteinyl-tRNA(Sec). This chain is Serine--tRNA ligase 1, found in Enterococcus faecalis (strain ATCC 700802 / V583).